We begin with the raw amino-acid sequence, 497 residues long: Solute carrier family 2, facilitated glucose transporter member 6 (497 aa).

Residues 1–36 (MQEPLLRTEGLDYDTFPEVPATPGERERAGALKNRR) are Cytoplasmic-facing. The Dileucine internalization motif signature appears at 5 to 6 (LL). A helical membrane pass occupies residues 37-57 (VFLATFAAVLGNFSFGYALVY). The Extracellular portion of the chain corresponds to 58–80 (TSPVIPELKLSSDPALHLDKIQA). A helical transmembrane segment spans residues 81 to 101 (SWFGSVFTLGAAAGGLSAMLL). Over 102–115 (NDLLGRKLSIMFSA) the chain is Cytoplasmic. A helical transmembrane segment spans residues 116–136 (VPSAIGYAIMAGARGLWMLLL). The Extracellular portion of the chain corresponds to 137-138 (GR). The helical transmembrane segment at 139–159 (MLTGFAGGLTAACIPVYVSEI) threads the bilayer. Residues 160–171 (APPDVRGALGAT) are Cytoplasmic-facing. The helical transmembrane segment at 172–192 (PQLMAVFGSLSLYALGLLLPW) threads the bilayer. Glutamine 173 serves as a coordination point for a D-hexose. Residue arginine 193 is a topological domain, extracellular. A helical membrane pass occupies residues 194-214 (WLAVAGEGPVLIMILLLSFMP). The Cytoplasmic portion of the chain corresponds to 215-273 (NSPRFLLSKSRDEEALQALTWLRADSEVHWEFEQIQDNVRRQSSRVSWAEAREPRVYRP). The chain crosses the membrane as a helical span at residues 274–294 (VLIAVLMRFLQQLTGITPILV). 284–285 (QQ) lines the a D-hexose pocket. Residues 295 to 312 (YLQTIFDNTSVVLPSQQD) lie on the Extracellular side of the membrane. The N-linked (GlcNAc...) asparagine glycan is linked to asparagine 302. Residues 313 to 333 (AAIVGAVRLLSVLIAAVTMDL) traverse the membrane as a helical segment. Topologically, residues 334–337 (AGRK) are cytoplasmic. The chain crosses the membrane as a helical span at residues 338-358 (VLLYVSASVMFAANLTLGLYV). The Extracellular segment spans residues 359 to 385 (QFVPRPLTPNSTVEIVTLGDTAFNYLT). Asparagine 368 is a glycosylation site (N-linked (GlcNAc...) asparagine). A helical membrane pass occupies residues 386–406 (LIPLLATMLFIMGYAMGWGPI). Residues 407-425 (TWLLMSEVLPLRARGVASG) are Cytoplasmic-facing. Tryptophan 408 contributes to the a D-hexose binding site. A helical membrane pass occupies residues 426–446 (LCVLVSWLTAFVLTNYFLLAV). Residue asparagine 447 is a topological domain, extracellular. Residues 448–468 (AFGLQVPFFFFSAICLLSLLF) traverse the membrane as a helical segment. The Cytoplasmic segment spans residues 469–497 (TGCCVPETRGRSLEQIEAFFHTRRMSFRP).

The protein belongs to the major facilitator superfamily. Sugar transporter (TC 2.A.1.1) family. In terms of tissue distribution, mainly expressed in brain and spleen. Also expressed in lung, heart, muscle, liver, kidney, fat, whole blood, testes, ovaries and uterus.

The protein localises to the lysosome membrane. In terms of biological role, probable sugar transporter that acts as a regulator of glycolysis in macrophages. Does not transport glucose. The polypeptide is Solute carrier family 2, facilitated glucose transporter member 6 (Mus musculus (Mouse)).